A 540-amino-acid chain; its full sequence is GMP synthase [glutamine-hydrolyzing] (540 aa).

Positions 29 to 222 (KILIVDFGSQ…VRKVAGLTGD (194 aa)) constitute a Glutamine amidotransferase type-1 domain. The Nucleophile role is filled by C106. Active-site residues include H196 and E198. The 193-residue stretch at 223 to 415 (WTMRAFREEA…LGLPDVFVGR (193 aa)) folds into the GMPS ATP-PPase domain. An ATP-binding site is contributed by 250-256 (SGGVDSA).

In terms of assembly, homodimer.

The catalysed reaction is XMP + L-glutamine + ATP + H2O = GMP + L-glutamate + AMP + diphosphate + 2 H(+). Its pathway is purine metabolism; GMP biosynthesis; GMP from XMP (L-Gln route): step 1/1. Its function is as follows. Catalyzes the synthesis of GMP from XMP. The polypeptide is GMP synthase [glutamine-hydrolyzing] (Rhodopseudomonas palustris (strain ATCC BAA-98 / CGA009)).